Consider the following 377-residue polypeptide: UPF0754 membrane protein GTNG_0550 (377 aa).

2 helical membrane passes run 7 to 27 (LLFM…IAIV) and 357 to 377 (YLGA…GLWL).

This sequence belongs to the UPF0754 family.

The protein resides in the cell membrane. The chain is UPF0754 membrane protein GTNG_0550 from Geobacillus thermodenitrificans (strain NG80-2).